The primary structure comprises 178 residues: Dual-action ribosomal maturation protein DarP (178 aa).

It belongs to the DarP family.

The protein localises to the cytoplasm. Functionally, member of a network of 50S ribosomal subunit biogenesis factors which assembles along the 30S-50S interface, preventing incorrect 23S rRNA structures from forming. Promotes peptidyl transferase center (PTC) maturation. The polypeptide is Dual-action ribosomal maturation protein DarP (Haemophilus influenzae (strain 86-028NP)).